Here is a 258-residue protein sequence, read N- to C-terminus: MSTLLDKTRKLNKILQKSGVEPVVFDDICKILSEVLGCNVYVISRKGKVLGYNFPDGFECSTVKNKIISEMRFPEQYNNKLLNAHETLPNLSNHGICVFEDGTPCDLEDKVTTIVPIIGNRERLGTLLLASFGEKFTDEDLVLGEYSATIVGLEILKSKNDEIEEEARKKAVVQLAIGTLSYSELEAVEHIFNELDGKEGLLVASKIADKVGITRSVIVNALRKFESAGVIESRSLGMKGTHIKILNDKLLDELKKIK.

The GAF domain stretch occupies residues 1 to 156; it reads MSTLLDKTRK…SATIVGLEIL (156 aa). Residues 204–223 constitute a DNA-binding region (H-T-H motif); that stretch reads ASKIADKVGITRSVIVNALR.

This sequence belongs to the CodY family.

It is found in the cytoplasm. DNA-binding global transcriptional regulator which is involved in the adaptive response to starvation and acts by directly or indirectly controlling the expression of numerous genes in response to nutrient availability. During rapid exponential growth, CodY is highly active and represses genes whose products allow adaptation to nutrient depletion. The polypeptide is Global transcriptional regulator CodY (Clostridium kluyveri (strain NBRC 12016)).